Here is a 772-residue protein sequence, read N- to C-terminus: 1,4-alpha-glucan branching enzyme GlgB (772 aa).

The active-site Nucleophile is the Asp-431. Glu-484 functions as the Proton donor in the catalytic mechanism.

Belongs to the glycosyl hydrolase 13 family. GlgB subfamily. In terms of assembly, monomer.

The enzyme catalyses Transfers a segment of a (1-&gt;4)-alpha-D-glucan chain to a primary hydroxy group in a similar glucan chain.. It participates in glycan biosynthesis; glycogen biosynthesis. Its function is as follows. Catalyzes the formation of the alpha-1,6-glucosidic linkages in glycogen by scission of a 1,4-alpha-linked oligosaccharide from growing alpha-1,4-glucan chains and the subsequent attachment of the oligosaccharide to the alpha-1,6 position. The polypeptide is 1,4-alpha-glucan branching enzyme GlgB (Synechococcus sp. (strain RCC307)).